The sequence spans 145 residues: D-aminoacyl-tRNA deacylase (145 aa).

Positions 137-138 (GP) match the Gly-cisPro motif, important for rejection of L-amino acids motif.

Belongs to the DTD family. As to quaternary structure, homodimer.

Its subcellular location is the cytoplasm. It catalyses the reaction glycyl-tRNA(Ala) + H2O = tRNA(Ala) + glycine + H(+). The catalysed reaction is a D-aminoacyl-tRNA + H2O = a tRNA + a D-alpha-amino acid + H(+). In terms of biological role, an aminoacyl-tRNA editing enzyme that deacylates mischarged D-aminoacyl-tRNAs. Also deacylates mischarged glycyl-tRNA(Ala), protecting cells against glycine mischarging by AlaRS. Acts via tRNA-based rather than protein-based catalysis; rejects L-amino acids rather than detecting D-amino acids in the active site. By recycling D-aminoacyl-tRNA to D-amino acids and free tRNA molecules, this enzyme counteracts the toxicity associated with the formation of D-aminoacyl-tRNA entities in vivo and helps enforce protein L-homochirality. This is D-aminoacyl-tRNA deacylase from Pseudomonas savastanoi pv. phaseolicola (strain 1448A / Race 6) (Pseudomonas syringae pv. phaseolicola (strain 1448A / Race 6)).